A 233-amino-acid polypeptide reads, in one-letter code: Metallo-beta-lactamase domain-containing protein 1 (233 aa).

7 residues coordinate Zn(2+): His-96, His-98, Asp-100, His-101, His-152, Asp-174, and His-213.

Belongs to the metallo-beta-lactamase superfamily. Glyoxalase II family. As to quaternary structure, homodimer. Zn(2+) is required as a cofactor.

It localises to the cytoplasm. Its subcellular location is the cytosol. The protein resides in the nucleus. It carries out the reaction a ribonucleotidyl-ribonucleotide-RNA + H2O = a 3'-end ribonucleotide-RNA + a 5'-end 5'-phospho-ribonucleoside-RNA + H(+). Functionally, endoribonuclease that catalyzes the hydrolysis of histone-coding pre-mRNA 3'-end. Involved in histone pre-mRNA processing during the S-phase of the cell cycle, which is required for entering/progressing through S-phase. Cleaves histone pre-mRNA at a major and a minor cleavage site after the 5'-ACCCA-3' and the 5'-ACCCACA-3' sequence, respectively, and located downstream of the stem-loop. May require the presence of the HDE element located at the histone pre-RNA 3'-end to avoid non-specific cleavage. The protein is Metallo-beta-lactamase domain-containing protein 1 (mblac1) of Xenopus laevis (African clawed frog).